Consider the following 259-residue polypeptide: Autophagy-related protein 27 (259 aa).

A signal peptide spans 1–15 (MWFPILTWLVATAVA). The 152-residue stretch at 16–167 (LDCSAKDLDS…QVKSKAACVT (152 aa)) folds into the MRH domain. The Lumenal portion of the chain corresponds to 16–184 (LDCSAKDLDS…PKKPEDNGES (169 aa)). 3 cysteine pairs are disulfide-bonded: C18-C57, C68-C75, and C135-C165. Residues 185–205 (WGWFTWIFIFMVLFLSIYIIG) form a helical membrane-spanning segment. Residues 206-259 (GAWFQYNKGNAIDFQSALREVLENFVDLVRGLPSFIREIIEKVTGSNRGEYSAV) lie on the Cytoplasmic side of the membrane.

This sequence belongs to the ATG27 family.

The protein localises to the cytoplasmic vesicle membrane. It is found in the golgi apparatus membrane. Its subcellular location is the mitochondrion membrane. The protein resides in the preautophagosomal structure membrane. In terms of biological role, effector of VPS34 phosphatidylinositol 3-phosphate kinase signaling. Regulates the cytoplasm to vacuole transport (Cvt) vesicle formation. Plays a role in ATG protein retrieval from the pre-autophagosomal structure (PAS) and is especially required for autophagy-dependent cycling of ATG9. The protein is Autophagy-related protein 27 (ATG27) of Meyerozyma guilliermondii (strain ATCC 6260 / CBS 566 / DSM 6381 / JCM 1539 / NBRC 10279 / NRRL Y-324) (Yeast).